We begin with the raw amino-acid sequence, 109 residues long: Cell division protein ZapA (109 aa).

Positions 21 to 99 (PEQRDALNQA…IEQALLEQGR (79 aa)) form a coiled coil.

This sequence belongs to the ZapA family. Type 1 subfamily. Homodimer. Interacts with FtsZ.

It is found in the cytoplasm. Activator of cell division through the inhibition of FtsZ GTPase activity, therefore promoting FtsZ assembly into bundles of protofilaments necessary for the formation of the division Z ring. It is recruited early at mid-cell but it is not essential for cell division. This is Cell division protein ZapA from Klebsiella pneumoniae (strain 342).